The following is a 360-amino-acid chain: Peptide chain release factor 1 (360 aa).

At Gln-235 the chain carries N5-methylglutamine.

The protein belongs to the prokaryotic/mitochondrial release factor family. Methylated by PrmC. Methylation increases the termination efficiency of RF1.

The protein resides in the cytoplasm. In terms of biological role, peptide chain release factor 1 directs the termination of translation in response to the peptide chain termination codons UAG and UAA. The sequence is that of Peptide chain release factor 1 from Paracidovorax citrulli (strain AAC00-1) (Acidovorax citrulli).